Reading from the N-terminus, the 549-residue chain is ATP synthase subunit alpha (549 aa).

ATP is bound at residue 172-179; the sequence is GDRKTGKT. Residues 513–549 are disordered; the sequence is SSTGESVVPDEHVEAMDEEDLGKESVKVKKPAPQKKK. A compositionally biased stretch (basic residues) spans 540–549; sequence VKKPAPQKKK.

This sequence belongs to the ATPase alpha/beta chains family. As to quaternary structure, F-type ATPases have 2 components, CF(1) - the catalytic core - and CF(0) - the membrane proton channel. CF(1) has five subunits: alpha(3), beta(3), gamma(1), delta(1), epsilon(1). CF(0) has three main subunits: a(1), b(2) and c(9-12). The alpha and beta chains form an alternating ring which encloses part of the gamma chain. CF(1) is attached to CF(0) by a central stalk formed by the gamma and epsilon chains, while a peripheral stalk is formed by the delta and b chains.

The protein localises to the cell membrane. It catalyses the reaction ATP + H2O + 4 H(+)(in) = ADP + phosphate + 5 H(+)(out). Its function is as follows. Produces ATP from ADP in the presence of a proton gradient across the membrane. The alpha chain is a regulatory subunit. The protein is ATP synthase subunit alpha of Mycobacterium ulcerans (strain Agy99).